Here is a 98-residue protein sequence, read N- to C-terminus: Small ribosomal subunit protein eS24 (98 aa).

The protein belongs to the eukaryotic ribosomal protein eS24 family.

The polypeptide is Small ribosomal subunit protein eS24 (Thermococcus onnurineus (strain NA1)).